The sequence spans 261 residues: Type III pantothenate kinase (261 aa).

6–13 is a binding site for ATP; it reads DVGNTNTV. 107–110 provides a ligand contact to substrate; sequence GADR. The active-site Proton acceptor is Asp-109. Asp-129 contacts K(+). Thr-132 provides a ligand contact to ATP. Residue Thr-183 participates in substrate binding.

The protein belongs to the type III pantothenate kinase family. As to quaternary structure, homodimer. Requires NH4(+) as cofactor. The cofactor is K(+).

It localises to the cytoplasm. It catalyses the reaction (R)-pantothenate + ATP = (R)-4'-phosphopantothenate + ADP + H(+). It functions in the pathway cofactor biosynthesis; coenzyme A biosynthesis; CoA from (R)-pantothenate: step 1/5. Functionally, catalyzes the phosphorylation of pantothenate (Pan), the first step in CoA biosynthesis. This Kosmotoga olearia (strain ATCC BAA-1733 / DSM 21960 / TBF 19.5.1) protein is Type III pantothenate kinase.